The following is a 308-amino-acid chain: Porphobilinogen deaminase (308 aa).

Position 241 is an S-(dipyrrolylmethanemethyl)cysteine (Cys-241).

It belongs to the HMBS family. As to quaternary structure, monomer. Dipyrromethane serves as cofactor.

It catalyses the reaction 4 porphobilinogen + H2O = hydroxymethylbilane + 4 NH4(+). It functions in the pathway porphyrin-containing compound metabolism; protoporphyrin-IX biosynthesis; coproporphyrinogen-III from 5-aminolevulinate: step 2/4. In terms of biological role, tetrapolymerization of the monopyrrole PBG into the hydroxymethylbilane pre-uroporphyrinogen in several discrete steps. The sequence is that of Porphobilinogen deaminase from Staphylococcus carnosus (strain TM300).